The primary structure comprises 401 residues: Large ribosomal subunit protein uL3 (401 aa).

A disordered region spans residues 1-22 (MSHRKFSAPRHGHMGFTPKKRS).

Belongs to the universal ribosomal protein uL3 family.

The protein localises to the cytoplasm. In terms of biological role, the L3 protein is a component of the large subunit of cytoplasmic ribosomes. This chain is Large ribosomal subunit protein uL3 (rpl-3), found in Caenorhabditis elegans.